The following is a 743-amino-acid chain: FHF complex subunit HOOK-interacting protein 2B (743 aa).

The segment at 186–219 (CGEPTALPKDTTSHGDKDCSHDGAPARPQLDGES) is disordered. Over residues 196–206 (TTSHGDKDCSH) the composition is skewed to basic and acidic residues.

This sequence belongs to the FHIP family. As to expression, expressed in liver.

Functionally, able to activate MAPK/ERK and TGFB signaling pathways. May regulate the activity of genes involved in intestinal barrier function and immunoprotective inflammation. May play a role in cell proliferation. This chain is FHF complex subunit HOOK-interacting protein 2B, found in Homo sapiens (Human).